Here is a 434-residue protein sequence, read N- to C-terminus: uncharacterized protein (434 aa).

At K216 the chain carries N6-(pyridoxal phosphate)lysine.

This is an uncharacterized protein from Schizosaccharomyces pombe (strain 972 / ATCC 24843) (Fission yeast).